The following is a 240-amino-acid chain: Oxygen-insensitive NADPH nitroreductase (240 aa).

Residues 11 to 15 (HRSIR), S39, Q67, 128 to 131 (YIGG), and 167 to 169 (KPR) contribute to the FMN site.

It belongs to the flavin oxidoreductase frp family. Homodimer. It depends on FMN as a cofactor.

Its function is as follows. Catalyzes the reduction of nitroaromatic compounds using NADPH. Has a broad electron acceptor specificity. Reduces nitrofurazone by a ping-pong bi-bi mechanism possibly to generate a two-electron transfer product. Major oxygen-insensitive nitroreductase in E.coli. This is Oxygen-insensitive NADPH nitroreductase (nfsA) from Escherichia coli (strain K12).